The primary structure comprises 563 residues: Adenine deaminase (563 aa).

Belongs to the metallo-dependent hydrolases superfamily. Adenine deaminase family. Mn(2+) is required as a cofactor.

It carries out the reaction adenine + H2O + H(+) = hypoxanthine + NH4(+). The protein is Adenine deaminase of Brucella anthropi (strain ATCC 49188 / DSM 6882 / CCUG 24695 / JCM 21032 / LMG 3331 / NBRC 15819 / NCTC 12168 / Alc 37) (Ochrobactrum anthropi).